A 346-amino-acid polypeptide reads, in one-letter code: MFEWMKNKKAISPILALLIVLGVTIVVGAVFYAWGSGLFNNSQQSTQSALEGTTSTITYAAGAIGVGVPKEIDVEGDLDLTYPTPDYKLSHLTTTDYGSYDERLIVPVPLTLENYYDSTLTNVKIESDGATEVAGLTLKKITLNYNGQNYDAYLLCTNDGTPFKGILNRTGIYPDATWTGDDGNNYTSVYYILAPNSVTGVAAVDGSKDLSVTTAKKWPYSQNDVQSMRLYAGGFNNMWYACAVNGSYSSWTNTLTATKFIGWNTAQAFYKYKTPIDAKFYTSEWDVGTLHKGEKVSKEIFFFFGSSMGFQEEPSGETTVKIPVKVVSDQGVYKQVDVNIVLKDRL.

The first 28 residues, 1-28, serve as a signal peptide directing secretion; the sequence is MFEWMKNKKAISPILALLIVLGVTIVVG.

This is an uncharacterized protein from Methanocaldococcus jannaschii (strain ATCC 43067 / DSM 2661 / JAL-1 / JCM 10045 / NBRC 100440) (Methanococcus jannaschii).